The sequence spans 240 residues: Protein FATTY ACID EXPORT 2, chloroplastic (240 aa).

A chloroplast-targeting transit peptide spans 1–84; that stretch reads MADLILSSSS…TANCVDSGVK (84 aa). Over residues 97–113 the composition is skewed to gly residues; sequence GGGIGGDKFGGGGGGGD. Residues 97-134 are disordered; sequence GGGIGGDKFGGGGGGGDGNDDGGEDDKEESDGKKSTPL. Over residues 114–125 the composition is skewed to acidic residues; it reads GNDDGGEDDKEE. The next 3 membrane-spanning stretches (helical) occupy residues 164–184, 186–206, and 214–234; these read SLLA…QLPT, PVLA…VMGT, and IFPA…YIHG.

Belongs to the TMEM14 family.

It localises to the plastid. Its subcellular location is the chloroplast membrane. In terms of biological role, may be involved in free fatty acids export from the plastids. This is Protein FATTY ACID EXPORT 2, chloroplastic from Arabidopsis thaliana (Mouse-ear cress).